The sequence spans 453 residues: Plasticin (453 aa).

Residues 1 to 51 (MSHSTFSHLFSPHFGAPVYSPVSSRIGGRYVSSSVPTRSVDFRSRSSAPAP) form a head region. The segment at 71–112 (FATRSNEKRELQELNDRFASFIEKVRHLEQQNSKLILELGQY) is coil 1A. The 314-residue stretch at 77–390 (EKRELQELND…KLLEGEENRI (314 aa)) folds into the IF rod domain. Residues 113 to 126 (KDQHQGSTGRINEL) are linker 1. The coil 1B stretch occupies residues 127–222 (CQQEMRELRR…KMHDEEIQDV (96 aa)). The interval 223-245 (QVSVQSQQMKMEVMETSSRPDLT) is linker 12. A coil 2 region spans residues 246 to 391 (GALRDIRAQY…LLEGEENRIV (146 aa)). The interval 392–453 (VPIMKMPSMS…KKDSHGQGKD (62 aa)) is tail. Residues 421-453 (IKTVETRDGEVVKESTKEKGRDEKKDSHGQGKD) form a disordered region. Residues 424 to 453 (VETRDGEVVKESTKEKGRDEKKDSHGQGKD) are compositionally biased toward basic and acidic residues.

This sequence belongs to the intermediate filament family. As to expression, optic nerve.

Type III neurofilament. The polypeptide is Plasticin (Carassius auratus (Goldfish)).